We begin with the raw amino-acid sequence, 155 residues long: DNA-directed RNA polymerase 1A (155 aa).

D88 is an active-site residue.

It belongs to the phage and mitochondrial RNA polymerase family.

The catalysed reaction is RNA(n) + a ribonucleoside 5'-triphosphate = RNA(n+1) + diphosphate. Functionally, DNA-dependent RNA polymerase catalyzes the transcription of DNA into RNA using the four ribonucleoside triphosphates as substrates. This Nicotiana tabacum (Common tobacco) protein is DNA-directed RNA polymerase 1A (RPOT1-SYL).